We begin with the raw amino-acid sequence, 381 residues long: Succinyl-diaminopimelate desuccinylase (381 aa).

Histidine 76 lines the Zn(2+) pocket. Aspartate 78 is an active-site residue. Position 107 (aspartate 107) interacts with Zn(2+). Glutamate 140 (proton acceptor) is an active-site residue. Zn(2+) contacts are provided by glutamate 141, glutamate 169, and histidine 354.

This sequence belongs to the peptidase M20A family. DapE subfamily. As to quaternary structure, homodimer. Requires Zn(2+) as cofactor. The cofactor is Co(2+).

The enzyme catalyses N-succinyl-(2S,6S)-2,6-diaminopimelate + H2O = (2S,6S)-2,6-diaminopimelate + succinate. It participates in amino-acid biosynthesis; L-lysine biosynthesis via DAP pathway; LL-2,6-diaminopimelate from (S)-tetrahydrodipicolinate (succinylase route): step 3/3. Functionally, catalyzes the hydrolysis of N-succinyl-L,L-diaminopimelic acid (SDAP), forming succinate and LL-2,6-diaminopimelate (DAP), an intermediate involved in the bacterial biosynthesis of lysine and meso-diaminopimelic acid, an essential component of bacterial cell walls. The sequence is that of Succinyl-diaminopimelate desuccinylase from Gluconobacter oxydans (strain 621H) (Gluconobacter suboxydans).